The chain runs to 316 residues: Putative ring-cleaving dioxygenase MhqA (316 aa).

VOC domains are found at residues 5–131 and 154–278; these read GIHH…LTAD and GLGP…LSTD. Fe cation contacts are provided by histidine 8, histidine 226, and glutamate 274.

Belongs to the extradiol ring-cleavage dioxygenase family. Fe(2+) is required as a cofactor.

The protein resides in the cytoplasm. In terms of biological role, putative ring-cleavage dioxygenase that may contribute to the degradation of aromatic compounds. The sequence is that of Putative ring-cleaving dioxygenase MhqA (mhqA) from Bacillus subtilis (strain 168).